The chain runs to 438 residues: Adenylosuccinate synthetase (438 aa).

GTP-binding positions include 13-19 (GDEGKGK) and 41-43 (GHT). The active-site Proton acceptor is Asp-14. Mg(2+) contacts are provided by Asp-14 and Gly-41. IMP contacts are provided by residues 14–17 (DEGK), 39–42 (NAGH), Thr-130, Arg-144, Gln-225, Thr-240, and Arg-310. His-42 functions as the Proton donor in the catalytic mechanism. 306–312 (ATTGRLR) contributes to the substrate binding site. GTP contacts are provided by residues Arg-312, 338–340 (KLD), and 421–423 (STG).

Belongs to the adenylosuccinate synthetase family. In terms of assembly, homodimer. Mg(2+) is required as a cofactor.

Its subcellular location is the cytoplasm. The catalysed reaction is IMP + L-aspartate + GTP = N(6)-(1,2-dicarboxyethyl)-AMP + GDP + phosphate + 2 H(+). It participates in purine metabolism; AMP biosynthesis via de novo pathway; AMP from IMP: step 1/2. Functionally, plays an important role in the de novo pathway of purine nucleotide biosynthesis. Catalyzes the first committed step in the biosynthesis of AMP from IMP. The polypeptide is Adenylosuccinate synthetase (Aliivibrio fischeri (strain ATCC 700601 / ES114) (Vibrio fischeri)).